The sequence spans 1249 residues: AMB antimetabolite synthetase AmbB (1249 aa).

Positions 245–633 (FEAQARRTPQ…LGRLDDQVKF (389 aa)) are adenylation. Residues 716–735 (IDRKALPRPQATGAEPQALP) are disordered. Positions 734 to 809 (LPSDPLEQAL…ALLELLRQAA (76 aa)) constitute a Carrier domain. Ser768 is subject to O-(pantetheine 4'-phosphoryl)serine. The condensation stretch occupies residues 823-1150 (GLSLAERRLW…CVTQALRQRG (328 aa)).

It belongs to the NRP synthetase family. It depends on pantetheine 4'-phosphate as a cofactor.

The enzyme catalyses holo-[peptidyl-carrier protein] + L-alanine + ATP = L-alanyl-[peptidyl-carrier protein] + AMP + diphosphate. Functionally, involved in the biosynthesis of the antimetabolite L-2-amino-4-methoxy-trans-3-butenoic acid (AMB), a non-proteinogenic amino acid which is toxic for prokaryotes and eukaryotes. Adenylates L-alanine and loads it onto its peptidyl carrier domain via a thioester linkage to the phosphopanthetheine moiety. In addition, loads activated L-Ala in trans onto the second carrier domain of AmbE. Can also activate L-Ser, Gly and D-Ala, albeit to a lower extent. The condensation domain of AmbB probably condenses the activated L-Ala and the L-Glu loaded on AmbE to form a L-Glu-L-Ala dipeptide at the first carrier domain of AmbE. The polypeptide is AMB antimetabolite synthetase AmbB (Pseudomonas aeruginosa (strain ATCC 15692 / DSM 22644 / CIP 104116 / JCM 14847 / LMG 12228 / 1C / PRS 101 / PAO1)).